We begin with the raw amino-acid sequence, 55 residues long: UPF0391 membrane protein RALTA_A0099 (55 aa).

A run of 2 helical transmembrane segments spans residues 5–25 (ALVF…GIAA) and 30–50 (IAKI…VMGL).

It belongs to the UPF0391 family.

It is found in the cell membrane. The polypeptide is UPF0391 membrane protein RALTA_A0099 (Cupriavidus taiwanensis (strain DSM 17343 / BCRC 17206 / CCUG 44338 / CIP 107171 / LMG 19424 / R1) (Ralstonia taiwanensis (strain LMG 19424))).